The primary structure comprises 189 residues: Large ribosomal subunit protein uL5 (189 aa).

The protein belongs to the universal ribosomal protein uL5 family. As to quaternary structure, part of the 50S ribosomal subunit; part of the 5S rRNA/L5/L18/L25 subcomplex. Contacts the 5S rRNA and the P site tRNA. Forms a bridge to the 30S subunit in the 70S ribosome.

Functionally, this is one of the proteins that bind and probably mediate the attachment of the 5S RNA into the large ribosomal subunit, where it forms part of the central protuberance. In the 70S ribosome it contacts protein S13 of the 30S subunit (bridge B1b), connecting the 2 subunits; this bridge is implicated in subunit movement. Contacts the P site tRNA; the 5S rRNA and some of its associated proteins might help stabilize positioning of ribosome-bound tRNAs. This is Large ribosomal subunit protein uL5 from Kocuria rhizophila (strain ATCC 9341 / DSM 348 / NBRC 103217 / DC2201).